Here is a 589-residue protein sequence, read N- to C-terminus: Pyruvate kinase (589 aa).

A substrate-binding site is contributed by R32. 4 residues coordinate K(+): N34, S36, D66, and T67. Residue 34–37 (NFSH) participates in ATP binding. ATP is bound by residues R73 and K157. E223 is a binding site for Mg(2+). Substrate is bound by residues G246, D247, and T279. D247 serves as a coordination point for Mg(2+).

Belongs to the pyruvate kinase family. The protein in the C-terminal section; belongs to the PEP-utilizing enzyme family. In terms of assembly, homotetramer. The cofactor is Mg(2+). It depends on K(+) as a cofactor.

It catalyses the reaction pyruvate + ATP = phosphoenolpyruvate + ADP + H(+). It functions in the pathway carbohydrate degradation; glycolysis; pyruvate from D-glyceraldehyde 3-phosphate: step 5/5. Its activity is regulated as follows. Strongly activated by glucose-6-phosphate, ribose-5-phosphate and fructose-6-phosphate. Weak activator AMP and weak inhibitor fructose-1,6-bisphosphate can act as strong inhibitors in the presence of strong activators. The chain is Pyruvate kinase (pyk) from Lactobacillus delbrueckii subsp. bulgaricus.